A 457-amino-acid chain; its full sequence is C4-dicarboxylate transport protein (457 aa).

9 consecutive transmembrane segments (helical) span residues 22–42 (FQVV…PAFA), 55–75 (LVKM…IAGM), 90–110 (VYFL…AHVV), 138–158 (LTLV…AFTG), 168–188 (GPNI…LALV), 209–229 (LVHI…AFTI), 242–262 (WLVG…LGVV), 335–357 (LFIA…LAVA), and 376–396 (AATL…ILGV).

It belongs to the dicarboxylate/amino acid:cation symporter (DAACS) (TC 2.A.23) family.

The protein resides in the cell inner membrane. In terms of biological role, responsible for the transport of dicarboxylates such as succinate, fumarate, and malate from the periplasm across the membrane. The chain is C4-dicarboxylate transport protein from Xanthomonas oryzae pv. oryzae (strain MAFF 311018).